The following is a 193-amino-acid chain: Acyl carrier protein phosphodiesterase (193 aa).

Belongs to the AcpH family.

The catalysed reaction is holo-[ACP] + H2O = apo-[ACP] + (R)-4'-phosphopantetheine + H(+). Converts holo-ACP to apo-ACP by hydrolytic cleavage of the phosphopantetheine prosthetic group from ACP. In Yersinia pestis, this protein is Acyl carrier protein phosphodiesterase.